The following is an 89-amino-acid chain: Putative regulatory protein RBAM_015500 (89 aa).

Belongs to the RemA family.

This Bacillus velezensis (strain DSM 23117 / BGSC 10A6 / LMG 26770 / FZB42) (Bacillus amyloliquefaciens subsp. plantarum) protein is Putative regulatory protein RBAM_015500.